The chain runs to 336 residues: Tetraacyldisaccharide 4'-kinase (336 aa).

60–67 is an ATP binding site; it reads TIGGTGKT.

This sequence belongs to the LpxK family.

The enzyme catalyses a lipid A disaccharide + ATP = a lipid IVA + ADP + H(+). It functions in the pathway glycolipid biosynthesis; lipid IV(A) biosynthesis; lipid IV(A) from (3R)-3-hydroxytetradecanoyl-[acyl-carrier-protein] and UDP-N-acetyl-alpha-D-glucosamine: step 6/6. Transfers the gamma-phosphate of ATP to the 4'-position of a tetraacyldisaccharide 1-phosphate intermediate (termed DS-1-P) to form tetraacyldisaccharide 1,4'-bis-phosphate (lipid IVA). The protein is Tetraacyldisaccharide 4'-kinase of Pseudomonas putida (strain W619).